Consider the following 361-residue polypeptide: tRNA-specific 2-thiouridylase MnmA (361 aa).

ATP-binding positions include 8–15 (GMSGGVDS) and M34. The segment at 94-96 (NPD) is interaction with target base in tRNA. Residue C99 is the Nucleophile of the active site. An intrachain disulfide couples C99 to C195. G123 is a binding site for ATP. The interaction with tRNA stretch occupies residues 145–147 (KDQ). The active-site Cysteine persulfide intermediate is C195. An interaction with tRNA region spans residues 307-308 (RY).

The protein belongs to the MnmA/TRMU family.

The protein localises to the cytoplasm. The catalysed reaction is S-sulfanyl-L-cysteinyl-[protein] + uridine(34) in tRNA + AH2 + ATP = 2-thiouridine(34) in tRNA + L-cysteinyl-[protein] + A + AMP + diphosphate + H(+). Its function is as follows. Catalyzes the 2-thiolation of uridine at the wobble position (U34) of tRNA, leading to the formation of s(2)U34. The polypeptide is tRNA-specific 2-thiouridylase MnmA (Legionella pneumophila (strain Lens)).